Reading from the N-terminus, the 467-residue chain is Dihydrolipoyl dehydrogenase 3 (467 aa).

FAD contacts are provided by residues 34-43, Lys52, and Ala116; that span reads EGRETLGGTC. Residues Cys43 and Cys48 are joined by a disulfide bond. NAD(+)-binding positions include 182–186, Glu205, Val239, and 272–275; these read GAGVI and AIGR. The FAD site is built by Asp314 and Ala322. The active-site Proton acceptor is His446.

Belongs to the class-I pyridine nucleotide-disulfide oxidoreductase family. As to quaternary structure, homodimer. It depends on FAD as a cofactor.

Its subcellular location is the cytoplasm. It carries out the reaction N(6)-[(R)-dihydrolipoyl]-L-lysyl-[protein] + NAD(+) = N(6)-[(R)-lipoyl]-L-lysyl-[protein] + NADH + H(+). In terms of biological role, LPD-3 may substitute for lipoamide dehydrogenase of the 2-oxoglutarate dehydrogenase and pyruvate multienzyme complexes when the latter is inactive or missing. The protein is Dihydrolipoyl dehydrogenase 3 (lpd3) of Pseudomonas aeruginosa (strain ATCC 15692 / DSM 22644 / CIP 104116 / JCM 14847 / LMG 12228 / 1C / PRS 101 / PAO1).